Here is a 549-residue protein sequence, read N- to C-terminus: Glucose-6-phosphate isomerase (549 aa).

Glutamate 355 acts as the Proton donor in catalysis. Residues histidine 387 and lysine 515 contribute to the active site.

This sequence belongs to the GPI family.

It is found in the cytoplasm. It catalyses the reaction alpha-D-glucose 6-phosphate = beta-D-fructose 6-phosphate. The protein operates within carbohydrate biosynthesis; gluconeogenesis. It functions in the pathway carbohydrate degradation; glycolysis; D-glyceraldehyde 3-phosphate and glycerone phosphate from D-glucose: step 2/4. Catalyzes the reversible isomerization of glucose-6-phosphate to fructose-6-phosphate. The polypeptide is Glucose-6-phosphate isomerase (Histophilus somni (strain 129Pt) (Haemophilus somnus)).